Consider the following 457-residue polypeptide: uncharacterized protein (457 aa).

This is an uncharacterized protein from Acanthamoeba polyphaga mimivirus (APMV).